A 116-amino-acid polypeptide reads, in one-letter code: MGTSELLKHIYDINLSYLLLAQRLINQEKASAMFRLGIDEKMADALSELTLPEMVKLAETNQLVCQFRFTDSTVINRLTQESRVDDLQQIHTGILLSSRLLRSASKDAAPTKKRAV.

The protein belongs to the FlhD family. As to quaternary structure, homodimer; disulfide-linked. Forms a heterohexamer composed of two FlhC and four FlhD subunits. Each FlhC binds a FlhD dimer, forming a heterotrimer, and a hexamer assembles by dimerization of two heterotrimers.

The protein resides in the cytoplasm. Functionally, functions in complex with FlhC as a master transcriptional regulator that regulates transcription of several flagellar and non-flagellar operons by binding to their promoter region. Activates expression of class 2 flagellar genes, including fliA, which is a flagellum-specific sigma factor that turns on the class 3 genes. Also regulates genes whose products function in a variety of physiological pathways. The chain is Flagellar transcriptional regulator FlhD from Pantoea ananatis (strain LMG 20103).